The chain runs to 283 residues: Methylamine utilization protein MauF (283 aa).

Transmembrane regions (helical) follow at residues Phe37–Ala57, Met58–Leu78, Gly116–Phe136, Tyr143–Met163, Ile187–Ile207, Ile210–Ile230, and Val263–Leu283.

Its subcellular location is the cell membrane. It functions in the pathway one-carbon metabolism; methylamine degradation. This chain is Methylamine utilization protein MauF (mauF), found in Methylobacillus flagellatus (strain ATCC 51484 / DSM 6875 / VKM B-1610 / KT).